An 83-amino-acid chain; its full sequence is Mitochondrial import inner membrane translocase subunit Tim8 (83 aa).

The Twin CX3C motif signature appears at 35 to 60; sequence CWDVCFSDYRPPSKMDGKTQTCIQNC. 2 cysteine pairs are disulfide-bonded: Cys-35/Cys-60 and Cys-39/Cys-56.

This sequence belongs to the small Tim family. In terms of assembly, heterohexamer; composed of 3 copies of ddp-1/tim-8 and 3 copies of tin-13/tim-13, named soluble 70 kDa complex. Associates with the TIM22 complex, whose core is composed of tim-22.

Its subcellular location is the mitochondrion inner membrane. Mitochondrial intermembrane chaperone that participates in the import and insertion of some multi-pass transmembrane proteins into the mitochondrial inner membrane. Also required for the transfer of beta-barrel precursors from the TOM complex to the sorting and assembly machinery (SAM complex) of the outer membrane. Acts as a chaperone-like protein that protects the hydrophobic precursors from aggregation and guide them through the mitochondrial intermembrane space. The ddp-1/tim-8-tim-13 complex mediates the import of some proteins while the predominant tim-9/tin-9.1-tim-10/tin-10 70 kDa complex mediates the import of much more proteins. The protein is Mitochondrial import inner membrane translocase subunit Tim8 of Caenorhabditis briggsae.